We begin with the raw amino-acid sequence, 410 residues long: Putative formamidase C869.04 (410 aa).

The protein belongs to the acetamidase/formamidase family. As to quaternary structure, homotrimer.

It is found in the cytoplasm. The protein localises to the nucleus. It catalyses the reaction formamide + H2O = formate + NH4(+). Functionally, hydrolyzes formamide with the production of ammonia which can be used as a source of nitrogen for growth. May also act on acetamide, propanamide and butanamide. The protein is Putative formamidase C869.04 of Schizosaccharomyces pombe (strain 972 / ATCC 24843) (Fission yeast).